The primary structure comprises 121 residues: Large ribosomal subunit protein uL18 (121 aa).

Belongs to the universal ribosomal protein uL18 family. As to quaternary structure, part of the 50S ribosomal subunit; part of the 5S rRNA/L5/L18/L25 subcomplex. Contacts the 5S and 23S rRNAs.

Functionally, this is one of the proteins that bind and probably mediate the attachment of the 5S RNA into the large ribosomal subunit, where it forms part of the central protuberance. The polypeptide is Large ribosomal subunit protein uL18 (Ehrlichia canis (strain Jake)).